Reading from the N-terminus, the 206-residue chain is Platelet glycoprotein Ib beta chain (206 aa).

The N-terminal stretch at 1 to 26 (MGSRPRGALSLLLLLLAPPSRPASGC) is a signal peptide. 2 disulfides stabilise this stretch: Cys-26–Cys-32 and Cys-30–Cys-39. In terms of domain architecture, LRRNT spans 27 to 55 (PAPCRCSETRVDCGRRGLTWASLPAAFPP). Residues 27–150 (PAPCRCSETR…CAPGLLCWGA (124 aa)) are Extracellular-facing. Residues 60 to 83 (LVLTDNNLTALPPGLLDTLPALRR) form an LRR repeat. The 55-residue stretch at 89–143 (NPWRCDCRLLPLRAWLAGRPEREFYRDLRCVAPLALRGRLLPYVAEDELRAACAP) folds into the LRRCT domain. 2 disulfide bridges follow: Cys-93–Cys-118 and Cys-95–Cys-141. The helical transmembrane segment at 151 to 171 (LVAQLALLVLGLLHALLLALL) threads the bilayer. Topologically, residues 172-206 (LSRLRRLRAQARARSTREFSLTAPLVAESAGGGAS) are cytoplasmic. Ser-186 is subject to Phosphoserine. Position 191 is a phosphoserine; by PKA (Ser-191). Thr-193 carries the post-translational modification Phosphothreonine. Ser-200 is modified (phosphoserine).

In terms of assembly, two GP-Ib beta are disulfide-linked to one GP-Ib alpha. GP-IX is complexed with the GP-Ib heterodimer via a non covalent linkage. Interacts with TRAF4.

The protein resides in the membrane. In terms of biological role, gp-Ib, a surface membrane protein of platelets, participates in the formation of platelet plugs by binding to von Willebrand factor, which is already bound to the subendothelium. The chain is Platelet glycoprotein Ib beta chain (Gp1bb) from Rattus norvegicus (Rat).